Reading from the N-terminus, the 55-residue chain is GRPSARYDAPYCSQEEVRECDDDCSGNPVRDACQCAYDPAGSPACDCYCVEPWRR.

The propeptide occupies 1–5 (GRPSA).

In terms of processing, contains 4 disulfide bonds. In terms of tissue distribution, expressed by the venom duct.

The protein localises to the secreted. In terms of biological role, probable neurotoxin with unknown target. Possibly targets ion channels. This is Conotoxin Cal22b from Californiconus californicus (California cone).